The following is a 644-amino-acid chain: Exoribonuclease 2 (644 aa).

The RNB domain occupies 189–516 (REDLTSLDFV…NHRLLKAVIK (328 aa)). The S1 motif domain maps to 561-643 (GTRFAAEIVD…ETRSIIARPV (83 aa)).

The protein belongs to the RNR ribonuclease family. RNase II subfamily.

The protein resides in the cytoplasm. It carries out the reaction Exonucleolytic cleavage in the 3'- to 5'-direction to yield nucleoside 5'-phosphates.. Involved in mRNA degradation. Hydrolyzes single-stranded polyribonucleotides processively in the 3' to 5' direction. The chain is Exoribonuclease 2 from Shigella flexneri.